The primary structure comprises 187 residues: Adenine phosphoribosyltransferase (187 aa).

133-137 is a binding site for AMP; that stretch reads ATGGS.

It belongs to the purine/pyrimidine phosphoribosyltransferase family. Homodimer. Mg(2+) is required as a cofactor.

It localises to the cytoplasm. The protein localises to the nucleus. The enzyme catalyses AMP + diphosphate = 5-phospho-alpha-D-ribose 1-diphosphate + adenine. The protein operates within purine metabolism; AMP biosynthesis via salvage pathway; AMP from adenine: step 1/1. Catalyzes a salvage reaction resulting in the formation of AMP, that is energically less costly than de novo synthesis. This chain is Adenine phosphoribosyltransferase (APT1), found in Kluyveromyces lactis (strain ATCC 8585 / CBS 2359 / DSM 70799 / NBRC 1267 / NRRL Y-1140 / WM37) (Yeast).